Here is a 156-residue protein sequence, read N- to C-terminus: MKLAVLAVGHRQPDWVNEGCAEYLKRMPRELAASVTEIKPEARGSKTREQLLAAEKSRIRDAMAAGSRLVVLDEKGDDLTTLKLAKRLETWMQDGRDVALLIGGADGLDEEFKQQADDRLRLSSLTLPHGMARLLLCEQLYRAVSVLKNHPYHREG.

Residues Leu72, Gly103, and 122–127 (LSSLTL) each bind S-adenosyl-L-methionine.

The protein belongs to the RNA methyltransferase RlmH family. As to quaternary structure, homodimer.

The protein localises to the cytoplasm. The enzyme catalyses pseudouridine(1915) in 23S rRNA + S-adenosyl-L-methionine = N(3)-methylpseudouridine(1915) in 23S rRNA + S-adenosyl-L-homocysteine + H(+). Functionally, specifically methylates the pseudouridine at position 1915 (m3Psi1915) in 23S rRNA. The polypeptide is Ribosomal RNA large subunit methyltransferase H (Dechloromonas aromatica (strain RCB)).